The chain runs to 541 residues: Chaperonin GroEL 2 (541 aa).

Residues 30-33, Lys51, 87-91, Gly415, and Asp496 contribute to the ATP site; these read TLGP and DGTTT.

This sequence belongs to the chaperonin (HSP60) family. Forms a cylinder of 14 subunits composed of two heptameric rings stacked back-to-back. Interacts with the co-chaperonin GroES.

It localises to the cytoplasm. The enzyme catalyses ATP + H2O + a folded polypeptide = ADP + phosphate + an unfolded polypeptide.. Its function is as follows. Together with its co-chaperonin GroES, plays an essential role in assisting protein folding. The GroEL-GroES system forms a nano-cage that allows encapsulation of the non-native substrate proteins and provides a physical environment optimized to promote and accelerate protein folding. The chain is Chaperonin GroEL 2 from Gluconacetobacter diazotrophicus (strain ATCC 49037 / DSM 5601 / CCUG 37298 / CIP 103539 / LMG 7603 / PAl5).